The following is a 506-amino-acid chain: Cytochrome P450 52B1 (506 aa).

Cys-451 is a binding site for heme.

This sequence belongs to the cytochrome P450 family. Heme serves as cofactor.

In terms of biological role, together with an NADPH cytochrome P450 the enzyme system catalyzes the terminal hydroxylation as the first step in the assimilation of alkanes and fatty acids. The protein is Cytochrome P450 52B1 (CYP52B1) of Candida tropicalis (Yeast).